Consider the following 176-residue polypeptide: Translation initiation factor IF-3 (176 aa).

Belongs to the IF-3 family. Monomer.

The protein resides in the cytoplasm. IF-3 binds to the 30S ribosomal subunit and shifts the equilibrium between 70S ribosomes and their 50S and 30S subunits in favor of the free subunits, thus enhancing the availability of 30S subunits on which protein synthesis initiation begins. The polypeptide is Translation initiation factor IF-3 (Streptococcus agalactiae serotype Ia (strain ATCC 27591 / A909 / CDC SS700)).